A 668-amino-acid polypeptide reads, in one-letter code: RNA-binding protein PIN4 (668 aa).

The disordered stretch occupies residues Met1–Ala77. Residues Asn8–Asn23 are compositionally biased toward low complexity. Residues Thr24–Ile36 show a composition bias toward polar residues. The span at Glu37–Asn46 shows a compositional bias: basic and acidic residues. The span at Gly47–Thr74 shows a compositional bias: polar residues. Ser56 carries the phosphoserine modification. In terms of domain architecture, RRM spans Asn85 to Met163. Positions Glu168 to Arg188 are enriched in basic and acidic residues. Residues Glu168–Leu214 are disordered. Phosphoserine is present on residues Ser189, Ser191, Ser194, and Ser197. Low complexity predominate over residues Ser189–Asn212. The residue at position 305 (Thr305) is a Phosphothreonine. 2 disordered regions span residues Gln374 to Gln398 and Val420 to Pro570. A Phosphoserine modification is found at Ser393. Residues Val420–Thr449 show a composition bias toward low complexity. Polar residues predominate over residues Pro450–Asn478. Ser466 carries the post-translational modification Phosphoserine. The span at Ser479 to Gln508 shows a compositional bias: low complexity. Residues Ala509–Ser551 are compositionally biased toward polar residues. Ser541 is modified (phosphoserine). The span at Gln552–Gln567 shows a compositional bias: low complexity. Phosphoserine occurs at positions 636, 638, 640, 653, and 655.

In terms of assembly, interacts with RAD53. Post-translationally, hyperphosphorylated in response to DNA damage by MEC1.

The protein localises to the cytoplasm. Functionally, involved in normal G2/M phase transition of the mitotic cell cycle. In association with RAD53, also involved in checkpoint control in response to DNA damage. This chain is RNA-binding protein PIN4 (PIN4), found in Saccharomyces cerevisiae (strain ATCC 204508 / S288c) (Baker's yeast).